We begin with the raw amino-acid sequence, 107 residues long: Nucleoid-associated protein A1E_05550 (107 aa).

The protein belongs to the YbaB/EbfC family. As to quaternary structure, homodimer.

It is found in the cytoplasm. Its subcellular location is the nucleoid. Functionally, binds to DNA and alters its conformation. May be involved in regulation of gene expression, nucleoid organization and DNA protection. The polypeptide is Nucleoid-associated protein A1E_05550 (Rickettsia canadensis (strain McKiel)).